Consider the following 1249-residue polypeptide: MAEDSHMQKQLEFQNGSLEEGFVVRSLENEPQNMMESLSPRKYSSSLKFKANGDYSGSYLTLSQPVSAKRSPSPMGTSVRSSPSLAKIQGSKQFCDGIDKNISMKPPISFLSSAASLGGYPLGKADLDHYTGRDSERSTRLSEKPPYSRYSSRNKSHDSVYFLGGLEGRKTSGSLLTMWNGNSLSCTGSSPISRSGAASMPSSPKQVRKMNLQDHSTLQPRLSRHKEPASENVSVRTRKYSGSSLSNMGAYSRSLPRLYKATDNQMSPLSLPPRSSLGNSRRGQLGEKDLPHSLVDSDNYLNFSSLSSGASPYKTCLSEGNPYVSSALSVPASPRVARKMLLASTSSDDFDRASYSGTSPSHSFISGEPDRVLVARRNFSCGSMELDDSDLESLRQSSETPQPVLRERKSSISSISGRDDLMDYHRRQREERLREQEMERLERQRLETILSLCAEYTKPEGRRLSAGTTVADVQKINKELEKLQLSDEESVFEDALVCPDARYRCHRKGSLQDVDVAGFGNLGHSASFLAPRGSRSDELLGDLTRTPPSSSAAFLKATNESSYLSILPKTPEDIGEEQRTQELAAMEDARMVILNNLEELEQKIKDINDQMDESSRELDMECALLDGEQKSETAELMKEKEILDHLNRKITELEKNIVGEKTKEKVKLDAEREKLERLQELYSEQKTQLDNCPESMREQLQQQLKRDADLLDVESKHFEDLEFQQLEHESRLDEEKENLTQQLLREVAEYQRNIVARKEKISALKKQASHIVQQAQREQDHFVKEKNNLIMMLQREKENLCNLEKKYSSLTGGKGFPINPNTLKEGYISVNEINESCGNSTNLSPSTQFPADADAAVTEPALAVPVSQPQSSEHFRSLEERKKQHKEGLYLSDTLPRKKTTPSLSPHFSSATMGRSTTPKAHLPLGQSNSCGSVLPHSLATMTKDSESRRMLRGYNHQQMSEGQRQKPEFYSRTASESNVYLNSFHYPDRSYKDQAYDTLSLDSSDSMETSISACSPDNISSASTSNIARIEEMERLLKQAHAEKTRLLESREREMEAKKRALEEEKRRREILEKRLQEETSQRQKLIEKEVKIREKQRAQARPLTRYLPVRKEDFDLRSHVETAGHNIDTCFHVSITEKTCRGYLIKMGGKIKTWKKRWFVFDRNKRTFSYYADKHEAKLKGVIYFQAIEEVYYDHLKNANKSPNPLLTFSVKTHDRIYYMVAPSPEAMRIWMDVIVTGAEGYTHFLL.

Disordered regions lie at residues 64 to 85 (QPVS…SPSL) and 128 to 154 (DHYT…SSRN). 2 positions are modified to phosphoserine: serine 71 and serine 73. Positions 74-84 (PMGTSVRSSPS) are enriched in polar residues. The span at 128–143 (DHYTGRDSERSTRLSE) shows a compositional bias: basic and acidic residues. Serine 156, serine 203, serine 241, and serine 244 each carry phosphoserine. Disordered regions lie at residues 190–248 (SPIS…LSNM) and 264–289 (NQMS…GEKD). The segment covering 231–248 (ENVSVRTRKYSGSSLSNM) has biased composition (polar residues). The span at 267–283 (SPLSLPPRSSLGNSRRG) shows a compositional bias: low complexity. A phosphoserine mark is found at serine 329, serine 333, serine 347, serine 380, serine 383, serine 389, serine 411, serine 416, serine 465, serine 486, and serine 510. The segment at 388-424 (DSDLESLRQSSETPQPVLRERKSSISSISGRDDLMDY) is disordered. 2 positions are modified to phosphothreonine: threonine 546 and threonine 570. Coiled coils occupy residues 580-692 (TQEL…LDNC) and 718-803 (FEDL…LCNL). The interval 866–934 (VSQPQSSEHF…LGQSNSCGSV (69 aa)) is disordered. Positions 873 to 888 (EHFRSLEERKKQHKEG) are enriched in basic and acidic residues. At threonine 894 the chain carries Phosphothreonine. The span at 901 to 919 (TPSLSPHFSSATMGRSTTP) shows a compositional bias: polar residues. Residues 1028 to 1094 (IARIEEMERL…QKLIEKEVKI (67 aa)) adopt a coiled-coil conformation. One can recognise a PH domain in the interval 1139-1242 (EKTCRGYLIK…WMDVIVTGAE (104 aa)).

As to quaternary structure, interacts with FLNC. Interacts with AMOTL2; interaction may facilitate PHLDB2 localization to the myotube podosome cortex that surrounds the core. Part of a cortical microtubule stabilization complex (CMSC) composed of KANK1, PPFIA1, PPFIBP1, ERC1/ELKS, PHLDB2/LL5beta, CLASPs, KIF21A and possibly additional interactors; within CMSCs KANK1 and PHLDB2/LL5beta appear to be the core components for targeting of microtubule-binding proteins KIF21A and CLASPs, whereas PPFIA1, PPFIBP1 and ERC1/ELKS serve as scaffolds for protein clustering. In terms of tissue distribution, expressed at postsynaptic membranes of skeletal neuromuscular junctions (at protein level).

Its subcellular location is the cytoplasm. The protein localises to the membrane. The protein resides in the cell projection. It is found in the podosome. It localises to the cell cortex. In terms of biological role, seems to be involved in the assembly of the postsynaptic apparatus. May play a role in acetyl-choline receptor (AChR) aggregation in the postsynaptic membrane. This is Pleckstrin homology-like domain family B member 2 (Phldb2) from Mus musculus (Mouse).